Consider the following 933-residue polypeptide: Bifunctional uridylyltransferase/uridylyl-removing enzyme (933 aa).

The segment at 1–379 (MAKISLKLDE…TFQRRKRKLA (379 aa)) is uridylyltransferase. The interval 380–736 (GTSDFIVDNH…VKTHQFEAVT (357 aa)) is uridylyl-removing. One can recognise an HD domain in the interval 496–619 (VDEHLIRCIG…VQSVERLKLL (124 aa)). ACT domains follow at residues 737–818 (EITV…EMIE) and 848–922 (VIEV…GIAP).

It belongs to the GlnD family. It depends on Mg(2+) as a cofactor.

It carries out the reaction [protein-PII]-L-tyrosine + UTP = [protein-PII]-uridylyl-L-tyrosine + diphosphate. It catalyses the reaction [protein-PII]-uridylyl-L-tyrosine + H2O = [protein-PII]-L-tyrosine + UMP + H(+). Uridylyltransferase (UTase) activity is inhibited by glutamine, while glutamine activates uridylyl-removing (UR) activity. In terms of biological role, modifies, by uridylylation and deuridylylation, the PII regulatory proteins (GlnB and homologs), in response to the nitrogen status of the cell that GlnD senses through the glutamine level. Under low glutamine levels, catalyzes the conversion of the PII proteins and UTP to PII-UMP and PPi, while under higher glutamine levels, GlnD hydrolyzes PII-UMP to PII and UMP (deuridylylation). Thus, controls uridylylation state and activity of the PII proteins, and plays an important role in the regulation of nitrogen fixation and metabolism. This Mesorhizobium japonicum (strain LMG 29417 / CECT 9101 / MAFF 303099) (Mesorhizobium loti (strain MAFF 303099)) protein is Bifunctional uridylyltransferase/uridylyl-removing enzyme.